A 337-amino-acid polypeptide reads, in one-letter code: Alcohol dehydrogenase 1 (337 aa).

The Zn(2+) site is built by C37, H58, C89, C92, C95, C103, and C145.

The protein belongs to the zinc-containing alcohol dehydrogenase family. As to quaternary structure, multimeric (with different ratios of monomers). Requires Zn(2+) as cofactor.

The catalysed reaction is a primary alcohol + NAD(+) = an aldehyde + NADH + H(+). It carries out the reaction a secondary alcohol + NAD(+) = a ketone + NADH + H(+). It participates in alcohol metabolism; ethanol biosynthesis via fermentation pathway. Its activity is regulated as follows. Inhibited by ethanol. The sequence is that of Alcohol dehydrogenase 1 (adhA) from Zymomonas mobilis subsp. mobilis (strain ATCC 31821 / ZM4 / CP4).